Consider the following 514-residue polypeptide: MKIDEFQGYLELDRSWQDSFLYPLSFQEYIYALAHDHGLNRTILLENAGYENKYNFLIVKRLIIRMYRQNQFILSTNDFQQNIFFASPQKIYSQVIAEVFSVIVEIPFSLRLLFSLEGKQIRKSHNLRSIHSIFPFLEDQFSHLNYVLDIRIPHPVHLEILVQTLRYWVKDAPSLHLLRFFLYESHNWNSFFSLKKNISFLKKRNQRFFLFLYNSHVCEYESIFFFICNQSSHLQSTFYGSLIERIHFYGKVEHLVKVFTKNFQVILWFFQDPLMHYVRYQGKSILASKATSLLINKWKYYLVNFWQCYFSVWSQPKRIYINQLSKNSLDFTGFLSSVCLNTSVVRSQMLENSFIMDNAINKFDTIVPSIPLIGSLSKAKFCNVLGHPISKPVWTDLSDSEIIDRFGXICRSISHYYSGSSKKTSLYRIKYILRLSCARTLARKHKSTVRSFLKRLGSEFLEEFFTEEEKVLSFLLPRDYSISQRLYRGRIWYLDIFCIHDFANHEWLVMRLSK.

It belongs to the intron maturase 2 family. MatK subfamily.

Its subcellular location is the plastid. The protein resides in the chloroplast. In terms of biological role, usually encoded in the trnK tRNA gene intron. Probably assists in splicing its own and other chloroplast group II introns. This chain is Maturase K, found in Drosophyllum lusitanicum (Portuguese sundew).